Reading from the N-terminus, the 582-residue chain is uncharacterized protein (582 aa).

12 helical membrane-spanning segments follow: residues 29 to 49, 117 to 137, 155 to 175, 225 to 245, 254 to 274, 287 to 307, 329 to 349, 376 to 396, 432 to 452, 458 to 478, 491 to 511, and 523 to 543; these read LFIVLLRFIIPSILVSFFAAL, ISAPITVIINALTLLITMGLA, VWATGFITNVIVSIATSMIIV, YVYILAGLFTIQTFNQMYFLL, FISIIPPLANLINILFDYLLI, ATVIGWSLSCLAYVIYNIVLI, YLYLIILIGLASFFRNAALSV, SIFGSVTPISNLMLQSVWGLI, IVYLLFGFGLNNIFLINLFNI, LVVSNLVLRITLVQSIFIALS, IGMAWIASLMQGLFTFAPVFF, and IYLYIWIQPINAILTCIGNWI.

It is found in the cell membrane. This is an uncharacterized protein from Mycoplasmoides gallisepticum (strain R(low / passage 15 / clone 2)) (Mycoplasma gallisepticum).